The primary structure comprises 571 residues: Adenine deaminase (571 aa).

Belongs to the metallo-dependent hydrolases superfamily. Adenine deaminase family. Mn(2+) is required as a cofactor.

The enzyme catalyses adenine + H2O + H(+) = hypoxanthine + NH4(+). This Dehalococcoides mccartyi (strain CBDB1) protein is Adenine deaminase.